The primary structure comprises 131 residues: Global transcriptional regulator Spx (131 aa).

Cysteines 10 and 13 form a disulfide.

Belongs to the ArsC family. Spx subfamily. Interacts with the C-terminal domain of the alpha subunit of the RNAP.

Its subcellular location is the cytoplasm. Its function is as follows. Global transcriptional regulator that plays a key role in stress response and exerts either positive or negative regulation of genes. Acts by interacting with the C-terminal domain of the alpha subunit of the RNA polymerase (RNAP). This interaction can enhance binding of RNAP to the promoter region of target genes and stimulate their transcription, or block interaction of RNAP with activator. This chain is Global transcriptional regulator Spx, found in Listeria innocua serovar 6a (strain ATCC BAA-680 / CLIP 11262).